Here is a 342-residue protein sequence, read N- to C-terminus: Protein pelota homolog (342 aa).

This sequence belongs to the eukaryotic release factor 1 family. Pelota subfamily. Monomer. Requires a divalent metal cation as cofactor.

The protein localises to the cytoplasm. In terms of biological role, may function in recognizing stalled ribosomes, interact with stem-loop structures in stalled mRNA molecules, and effect endonucleolytic cleavage of the mRNA. May play a role in the release non-functional ribosomes and degradation of damaged mRNAs. Has endoribonuclease activity. This Sulfolobus acidocaldarius (strain ATCC 33909 / DSM 639 / JCM 8929 / NBRC 15157 / NCIMB 11770) protein is Protein pelota homolog.